The chain runs to 559 residues: Cytoplasmic polyadenylation element-binding protein 1 (559 aa).

A disordered region spans residues 223–244 (RLDHSSSPLTPPPSATSSGGLS). 2 RRM domains span residues 304–401 (CKVF…DAQV) and 423–504 (NTVF…PYLE). Zn(2+) is bound by residues C508, C511, C520, C525, C530, C533, H538, and H546.

It belongs to the RRM CPEB family. Interacts with kinesin, dynein, APLP1, APLP2, TENT2/GLD2 and APP. Both phosphorylated and non phosphorylated forms interact with APLP1. Interacts with TENT4B; the interaction is required for TENT4B-mediated translational control.

The protein localises to the cytoplasm. Sequence-specific RNA-binding protein that regulates mRNA cytoplasmic polyadenylation and translation initiation during oocyte maturation and early development. Binds to the cytoplasmic polyadenylation element (CPE), an uridine-rich sequence element (consensus sequence 5'-UUUUUAU-3') within the mRNA 3'-UTR. This Carassius auratus (Goldfish) protein is Cytoplasmic polyadenylation element-binding protein 1 (cpeb1).